The chain runs to 291 residues: HTH-type transcriptional regulator CitR (291 aa).

The region spanning 1–58 (MDFKWLHTFVTAAKYENFRKTAETLFLSQPTVTVHIKQLEKEISCKLFERKGRQIQLT) is the HTH lysR-type domain. The H-T-H motif DNA-binding region spans 18 to 37 (FRKTAETLFLSQPTVTVHIK).

Belongs to the LysR transcriptional regulatory family.

The protein localises to the cytoplasm. Functionally, negative regulatory protein for the citA gene for citrate synthase I. The polypeptide is HTH-type transcriptional regulator CitR (citR) (Bacillus subtilis (strain 168)).